A 167-amino-acid polypeptide reads, in one-letter code: Peptide deformylase (167 aa).

The Fe cation site is built by C91 and H133. E134 is an active-site residue. H137 lines the Fe cation pocket.

Belongs to the polypeptide deformylase family. The cofactor is Fe(2+).

The catalysed reaction is N-terminal N-formyl-L-methionyl-[peptide] + H2O = N-terminal L-methionyl-[peptide] + formate. Functionally, removes the formyl group from the N-terminal Met of newly synthesized proteins. Requires at least a dipeptide for an efficient rate of reaction. N-terminal L-methionine is a prerequisite for activity but the enzyme has broad specificity at other positions. This chain is Peptide deformylase, found in Neisseria gonorrhoeae (strain ATCC 700825 / FA 1090).